The chain runs to 420 residues: Protein disulfide isomerase Creld1 (420 aa).

The N-terminal stretch at 1 to 29 (MAPLPPRGLVPSLLWCLSLFLSLPGPVWL) is a signal peptide. Over 30–362 (QPSPPPHPSP…GFFAEMTEDE (333 aa)) the chain is Extracellular. Residues 46–49 (CHTC) carry the CXXC motif. 4 disulfide bridges follow: cysteine 46-cysteine 49, cysteine 155-cysteine 169, cysteine 163-cysteine 181, and cysteine 183-cysteine 192. An EGF-like 1 domain is found at 153-193 (LPCPGGTERPCGGYGQCEGEGTRGGSGHCDCQAGYGGEACG). Asparagine 205 is a glycosylation site (N-linked (GlcNAc...) asparagine). 2 FU repeats span residues 208-255 (HLVC…EQAT) and 268-315 (SYEC…VVCP). The short motif at 278 to 281 (CLGC) is the CXXC element. 4 cysteine pairs are disulfide-bonded: cysteine 278–cysteine 281, cysteine 309–cysteine 321, cysteine 314–cysteine 330, and cysteine 332–cysteine 343. An EGF-like 2; calcium-binding domain is found at 305-342 (DVDECETVVCPGENEKCENTEGGYRCVCAEGYRQEDGI). Residues 363-383 (MVVLQQMFFGVIICALATLAA) traverse the membrane as a helical segment. A topological domain (cytoplasmic) is located at residue lysine 384. A helical membrane pass occupies residues 385–405 (GDLVFTAIFIGAVAAMTGYWL). The Extracellular segment spans residues 406 to 420 (SERSDRVLEGFIKGR).

This sequence belongs to the CRELD family. In terms of tissue distribution, expressed in myoblast C2C12 cells (at protein level).

The protein localises to the membrane. The enzyme catalyses Catalyzes the rearrangement of -S-S- bonds in proteins.. Functionally, protein disulfide isomerase. Promotes the localization of acetylcholine receptors (AChRs) to the plasma membrane. This Mus musculus (Mouse) protein is Protein disulfide isomerase Creld1 (Creld1).